Reading from the N-terminus, the 696-residue chain is Serotransferrin (696 aa).

Transferrin-like domains lie at 6 to 332 and 346 to 672; these read VRWC…NLRE and VRWC…NLRK. Disulfide bonds link C9-C47 and C19-C38. Residue R23 is modified to Dimethylated arginine. Residue N25 is glycosylated (N-linked (GlcNAc...) asparagine). Residues D62 and Y94 each contribute to the Fe(3+) site. Cystine bridges form between C117–C198, C157–C173, C160–C181, C170–C183, and C231–C245. Hydrogencarbonate is bound by residues T119, R123, A125, and G126. Position 192 (Y192) interacts with Fe(3+). H253 lines the Fe(3+) pocket. 11 disulfide bridges follow: C343/C605, C349/C381, C359/C372, C406/C682, C423/C646, C456/C532, C480/C673, C490/C504, C501/C515, C572/C586, and C624/C629. At S374 the chain carries Phosphoserine. D396 and Y431 together coordinate Fe(3+). Residues T458, R462, A464, and G465 each coordinate hydrogencarbonate. A glycan (N-linked (GlcNAc...) asparagine) is linked at N497. Residue Y526 participates in Fe(3+) binding. H594 serves as a coordination point for Fe(3+). S674 carries the post-translational modification Phosphoserine.

It belongs to the transferrin family. As to quaternary structure, monomer. Part of a complex composed of SLC40A1/ferroportin, TF/transferrin and HEPH/hephaestin that transfers iron from cells to transferrin. In terms of tissue distribution, expressed by the liver and secreted in plasma.

The protein localises to the secreted. Its function is as follows. Transferrins are iron binding transport proteins which can bind two Fe(3+) ions in association with the binding of an anion, usually bicarbonate. It is responsible for the transport of iron from sites of absorption and heme degradation to those of storage and utilization. Serum transferrin may also have a further role in stimulating cell proliferation. The protein is Serotransferrin (TF) of Sus scrofa (Pig).